A 219-amino-acid polypeptide reads, in one-letter code: Response regulator ArlR (219 aa).

Residues 3 to 116 (QILIVEDEQN…ELLARIRAIL (114 aa)) enclose the Response regulatory domain. Asp52 is subject to 4-aspartylphosphate. Positions 122 to 219 (KDIIDVNGIT…TVRGVGYVIR (98 aa)) form a DNA-binding region, ompR/PhoB-type.

Phosphorylated by ArlS.

Its subcellular location is the cytoplasm. Member of the two-component regulatory system ArlS/ArlR involved in the regulation of adhesion, autolysis, multidrug resistance and virulence. This is Response regulator ArlR (arlR) from Staphylococcus aureus (strain USA300).